Here is a 497-residue protein sequence, read N- to C-terminus: Carboxylesterase (497 aa).

The active-site Acyl-ester intermediate is Ser185. Active-site charge relay system residues include Glu319 and His415.

The protein belongs to the type-B carboxylesterase/lipase family.

The protein localises to the secreted. It catalyses the reaction a carboxylic ester + H2O = an alcohol + a carboxylate + H(+). This Thermobifida fusca (Thermomonospora fusca) protein is Carboxylesterase.